The chain runs to 426 residues: Enolase (426 aa).

A (2R)-2-phosphoglycerate-binding site is contributed by Q162. The active-site Proton donor is E204. Residues D241, E288, and D315 each contribute to the Mg(2+) site. Positions 340, 369, 370, and 391 each coordinate (2R)-2-phosphoglycerate. K340 (proton acceptor) is an active-site residue.

It belongs to the enolase family. Mg(2+) is required as a cofactor.

The protein resides in the cytoplasm. It localises to the secreted. Its subcellular location is the cell surface. It catalyses the reaction (2R)-2-phosphoglycerate = phosphoenolpyruvate + H2O. Its pathway is carbohydrate degradation; glycolysis; pyruvate from D-glyceraldehyde 3-phosphate: step 4/5. In terms of biological role, catalyzes the reversible conversion of 2-phosphoglycerate (2-PG) into phosphoenolpyruvate (PEP). It is essential for the degradation of carbohydrates via glycolysis. The chain is Enolase from Bacteroides thetaiotaomicron (strain ATCC 29148 / DSM 2079 / JCM 5827 / CCUG 10774 / NCTC 10582 / VPI-5482 / E50).